We begin with the raw amino-acid sequence, 456 residues long: Coenzyme F420 hydrogenase subunit alpha (456 aa).

Ni(2+)-binding residues include Cys63, Cys66, Cys432, and Cys435.

Belongs to the [NiFe]/[NiFeSe] hydrogenase large subunit family. As to quaternary structure, pentamer of two alpha chains, two beta chains and a gamma chain. Ni(2+) serves as cofactor. The cofactor is iron-sulfur cluster. FAD is required as a cofactor.

The protein localises to the cell membrane. The enzyme catalyses oxidized coenzyme F420-(gamma-L-Glu)(n) + H2 + H(+) = reduced coenzyme F420-(gamma-L-Glu)(n). Reduces the physiological low-potential two-electron acceptor coenzyme F420, and the artificial one-electron acceptor methylviologen. The chain is Coenzyme F420 hydrogenase subunit alpha (frhA) from Methanosarcina barkeri (strain Fusaro / DSM 804).